The following is a 413-amino-acid chain: Divalent metal cation transporter MntH (413 aa).

At 1 to 19 the chain is on the cytoplasmic side; that stretch reads MTDNRVENSSGRAARKLRL. The chain crosses the membrane as a helical span at residues 20-39; that stretch reads ALMGPAFIAAIGYIDPGNFA. Residues 40-51 lie on the Periplasmic side of the membrane; that stretch reads TNIQAGASFGYQ. Residues 52 to 71 traverse the membrane as a helical segment; sequence LLWVVVWANLMAMLIQILSA. Over 72–95 the chain is Cytoplasmic; sequence KLGIATGKNLAEQIRDHYPRPVVW. Residues 96 to 118 form a helical membrane-spanning segment; it reads FYWVQAEIIAMATDLAEFIGAAI. Over 119–125 the chain is Periplasmic; the sequence is GFKLILG. The helical transmembrane segment at 126–145 threads the bilayer; the sequence is VSLLQGAVLTGIATFLILML. Topologically, residues 146 to 155 are cytoplasmic; that stretch reads QRRGQKPLEK. Residues 156 to 175 traverse the membrane as a helical segment; the sequence is VIGGLLLFVAAAYIVELFFS. Over 176 to 196 the chain is Periplasmic; sequence QPDMAQLGKGMVIPALPNPEA. The helical transmembrane segment at 197–220 threads the bilayer; the sequence is VFLAAGVLGATIMPHVIYLHSSLT. Residues 221-238 are Cytoplasmic-facing; the sequence is QHLHGGTRQQRYSATKWD. The chain crosses the membrane as a helical span at residues 239–258; it reads VAIAMTIAGFVNLAMMATAA. Residues 259 to 276 are Periplasmic-facing; that stretch reads AAFHFSGHTGIADLDQAY. A helical membrane pass occupies residues 277–297; it reads LTLEPLLSHAAATVFGLSLVA. The Cytoplasmic segment spans residues 298–327; sequence AGLSSTVVGTLAGQVVMQGFVRFHIPLWVR. Residues 328 to 344 traverse the membrane as a helical segment; sequence RTITMLPSFIVILMGLD. The Periplasmic portion of the chain corresponds to 345 to 350; sequence PTRILV. A helical transmembrane segment spans residues 351 to 370; that stretch reads MSQVLLSFGIALALVPLLIF. Over 371 to 387 the chain is Cytoplasmic; it reads TSNATLMGELVNTRRVK. A helical transmembrane segment spans residues 388–406; the sequence is QIGWIIVVLVVALNIWLLV. The Periplasmic segment spans residues 407-413; the sequence is GTVMGLS.

Belongs to the NRAMP family.

The protein localises to the cell inner membrane. Functionally, h(+)-stimulated, divalent metal cation uptake system. This Salmonella schwarzengrund (strain CVM19633) protein is Divalent metal cation transporter MntH.